The sequence spans 1774 residues: Kinesin-like protein KIF20B (1774 aa).

One can recognise a Kinesin motor domain in the interval 58–477 (YLQVCLRIRP…LKFSTTAQRV (420 aa)). ATP is bound at residue 152–159 (GLTNSGKT). Residue Ser-486 is modified to Phosphoserine. 2 coiled-coil regions span residues 525–601 (EDVL…KIRE) and 705–747 (QEAI…LVQA). The span at 538–555 (EENEETQNMETELTDEDS) shows a compositional bias: acidic residues. 2 disordered regions span residues 538–557 (EENE…DSDK) and 740–799 (ESNS…PPAK). The segment covering 741-778 (SNSLVQALKTSSKVDTSLTSNKSTCNETSEMPKNSRAQ) has biased composition (polar residues). Residues 779–788 (THSERKRLNE) show a composition bias toward basic and acidic residues. Residues 824-946 (SEVVEGNRVL…QMQTKIDELR (123 aa)) adopt a coiled-coil conformation. Ser-950 is subject to Phosphoserine. The segment at 1002-1059 (ENSFHASIEAIWEECKEIVKASSKKSHQIQGLEEQIEKLQVEVKGYREENSDLRAQES) is necessary and sufficient for interaction with SHTN1. Residues 1021–1507 (KASSKKSHQI…DEEIQELRKA (487 aa)) are a coiled coil. A phosphoserine mark is found at Ser-1107 and Ser-1542. The interaction with PIN1 stretch occupies residues 1514 to 1774 (TENQTMNPKP…KRRLRTRTAK (261 aa)). The residue at position 1598 (Thr-1598) is a Phosphothreonine; by CDK1. Ser-1612 is modified (phosphoserine). Residues 1625-1663 (KKNSTPRSNVKFPVSEHRNSPVKKEQKVSVGPSSKKTYS) are disordered. The segment covering 1638–1651 (VSEHRNSPVKKEQK) has biased composition (basic and acidic residues). Phosphoserine is present on residues Ser-1669 and Ser-1694.

The protein belongs to the TRAFAC class myosin-kinesin ATPase superfamily. Kinesin family. In terms of assembly, oligomerizes (via kinesin motor domain). Associates with microtubules. Interacts (via C-terminal globular tail region) with PIN1 (via WW domain). Interacts with PRC1. Interacts with SHTN1 (via N-terminus); the interaction is direct and promotes the association of SHTN1 to microtubules in primary neurons. Associates with microtubules. Phosphorylated during mitosis by CDK1. As to expression, expressed in the brain (at protein level).

Its subcellular location is the nucleus. It localises to the cytoplasm. The protein localises to the cytoskeleton. It is found in the microtubule organizing center. The protein resides in the centrosome. Its subcellular location is the nucleolus. It localises to the nucleoplasm. The protein localises to the spindle. It is found in the spindle pole. The protein resides in the midbody. Its subcellular location is the cell projection. It localises to the axon. The protein localises to the growth cone. Functionally, plus-end-directed motor enzyme that is required for completion of cytokinesis. Required for proper midbody organization and abscission in polarized cortical stem cells. Plays a role in the regulation of neuronal polarization by mediating the transport of specific cargos. Participates in the mobilization of SHTN1 and in the accumulation of PIP3 in the growth cone of primary hippocampal neurons in a tubulin and actin-dependent manner. In the developing telencephalon, cooperates with SHTN1 to promote both the transition from the multipolar to the bipolar stage and the radial migration of cortical neurons from the ventricular zone toward the superficial layer of the neocortex. Involved in cerebral cortex growth. Acts as an oncogene for promoting bladder cancer cells proliferation, apoptosis inhibition and carcinogenic progression. The protein is Kinesin-like protein KIF20B of Mus musculus (Mouse).